The sequence spans 245 residues: MAARHQFENSNEIGVFAALTNAYCLAAVGGSENFYSVFEAELSNEIPVIKASLAGTRLVGRLSVGNKHGLLLPTSATDQEVMHIRNSLPDEVIVQRTEERLSALGNCVACNDHVALVHPDIDQETEEIIADVLGVEVFRQSVAGNVLVGSFCKFSNRGGMVHPQASVQEVDELSSLLQVPLVAGTINRGSDVIGAGLLVNDWIAFCGLDTTSTEIQVIESIYQLHGADSSGAVRDIRASLLDTLV.

This sequence belongs to the eIF-6 family. Monomer. Associates with the 60S ribosomal subunit.

The protein localises to the cytoplasm. The protein resides in the nucleus. It localises to the nucleolus. Its function is as follows. Binds to the 60S ribosomal subunit and prevents its association with the 40S ribosomal subunit to form the 80S initiation complex in the cytoplasm. May also be involved in ribosome biogenesis. The polypeptide is Eukaryotic translation initiation factor 6 (Ostreococcus lucimarinus (strain CCE9901)).